We begin with the raw amino-acid sequence, 354 residues long: Uroporphyrinogen decarboxylase (354 aa).

Substrate is bound by residues 25-29 (RQAGR), Asp75, Tyr152, Thr207, and His330.

This sequence belongs to the uroporphyrinogen decarboxylase family. Homodimer.

The protein localises to the cytoplasm. It catalyses the reaction uroporphyrinogen III + 4 H(+) = coproporphyrinogen III + 4 CO2. It participates in porphyrin-containing compound metabolism; protoporphyrin-IX biosynthesis; coproporphyrinogen-III from 5-aminolevulinate: step 4/4. Functionally, catalyzes the decarboxylation of four acetate groups of uroporphyrinogen-III to yield coproporphyrinogen-III. The sequence is that of Uroporphyrinogen decarboxylase from Xanthomonas oryzae pv. oryzae (strain PXO99A).